Consider the following 730-residue polypeptide: Ribosomal RNA large subunit methyltransferase K/L (730 aa).

One can recognise a THUMP domain in the interval 46 to 157 (TAYRLCVWSR…RGEAILSLDL (112 aa)). The interval 394–418 (GERREAQPEGTEARQQVPQASEPAR) is disordered.

This sequence belongs to the methyltransferase superfamily. RlmKL family.

It is found in the cytoplasm. It catalyses the reaction guanosine(2445) in 23S rRNA + S-adenosyl-L-methionine = N(2)-methylguanosine(2445) in 23S rRNA + S-adenosyl-L-homocysteine + H(+). It carries out the reaction guanosine(2069) in 23S rRNA + S-adenosyl-L-methionine = N(2)-methylguanosine(2069) in 23S rRNA + S-adenosyl-L-homocysteine + H(+). Specifically methylates the guanine in position 2445 (m2G2445) and the guanine in position 2069 (m7G2069) of 23S rRNA. The sequence is that of Ribosomal RNA large subunit methyltransferase K/L from Pseudomonas putida (strain ATCC 700007 / DSM 6899 / JCM 31910 / BCRC 17059 / LMG 24140 / F1).